The following is a 143-amino-acid chain: Transcriptional regulator MraZ (143 aa).

SpoVT-AbrB domains are found at residues 5–47 (QYEH…SLDE) and 76–119 (AVEC…SKEV).

The protein belongs to the MraZ family. In terms of assembly, forms oligomers.

The protein resides in the cytoplasm. Its subcellular location is the nucleoid. In Caldanaerobacter subterraneus subsp. tengcongensis (strain DSM 15242 / JCM 11007 / NBRC 100824 / MB4) (Thermoanaerobacter tengcongensis), this protein is Transcriptional regulator MraZ.